We begin with the raw amino-acid sequence, 185 residues long: NADH-quinone oxidoreductase subunit B (185 aa).

[4Fe-4S] cluster is bound by residues cysteine 38, cysteine 39, cysteine 104, and cysteine 133. A compositionally biased stretch (basic and acidic residues) spans 165-176 (AAEAYREEERQA). Positions 165–185 (AAEAYREEERQAARSALGPRS) are disordered.

Belongs to the complex I 20 kDa subunit family. In terms of assembly, NDH-1 is composed of 14 different subunits. Subunits NuoB, C, D, E, F, and G constitute the peripheral sector of the complex. The cofactor is [4Fe-4S] cluster.

The protein resides in the cell membrane. The catalysed reaction is a quinone + NADH + 5 H(+)(in) = a quinol + NAD(+) + 4 H(+)(out). Its function is as follows. NDH-1 shuttles electrons from NADH, via FMN and iron-sulfur (Fe-S) centers, to quinones in the respiratory chain. The immediate electron acceptor for the enzyme in this species is believed to be ubiquinone. Couples the redox reaction to proton translocation (for every two electrons transferred, four hydrogen ions are translocated across the cytoplasmic membrane), and thus conserves the redox energy in a proton gradient. The polypeptide is NADH-quinone oxidoreductase subunit B (Thermomicrobium roseum (strain ATCC 27502 / DSM 5159 / P-2)).